Consider the following 513-residue polypeptide: Cytochrome P450 4d10 (513 aa).

Residues Glu-317 and Cys-457 each coordinate heme.

The protein belongs to the cytochrome P450 family. Heme serves as cofactor.

It is found in the endoplasmic reticulum membrane. The protein resides in the microsome membrane. In terms of biological role, may play an important role in the maintenance of specific insect-host plant relationships. May be involved in xenobiotic metabolism. This Drosophila mettleri (Fruit fly) protein is Cytochrome P450 4d10 (Cyp4d10).